The chain runs to 287 residues: Ret finger protein-like 4A (287 aa).

The RING-type; degenerate zinc finger occupies 11-53 (CYFCFRCLESPVYLNCGYICCLKCLDSLEKSPEGDGVLCPTCS). One can recognise a B30.2/SPRY domain in the interval 78–278 (EPQLNFILTM…LSICPVTNPG (201 aa)).

As to quaternary structure, interacts with PSMB1, UBE2A and CCNB1. In terms of tissue distribution, expressed in the ovaries and oocytes (at protein level). Expression restricted to gonads. In testis, present at later stages of spermatogeneis and abundant in elongating spermatids.

It is found in the cytoplasm. The protein localises to the nucleus. This chain is Ret finger protein-like 4A (Rfpl4a), found in Mus musculus (Mouse).